Consider the following 692-residue polypeptide: Elongation factor G (692 aa).

One can recognise a tr-type G domain in the interval 8–282 (ENTRNIGIMA…AVIDYLPSPL (275 aa)). GTP is bound by residues 17 to 24 (AHIDAGKT), 81 to 85 (DTPGH), and 135 to 138 (NKMD).

This sequence belongs to the TRAFAC class translation factor GTPase superfamily. Classic translation factor GTPase family. EF-G/EF-2 subfamily.

The protein localises to the cytoplasm. Catalyzes the GTP-dependent ribosomal translocation step during translation elongation. During this step, the ribosome changes from the pre-translocational (PRE) to the post-translocational (POST) state as the newly formed A-site-bound peptidyl-tRNA and P-site-bound deacylated tRNA move to the P and E sites, respectively. Catalyzes the coordinated movement of the two tRNA molecules, the mRNA and conformational changes in the ribosome. The polypeptide is Elongation factor G (Bacillus cereus (strain ATCC 10987 / NRS 248)).